The following is a 597-amino-acid chain: tRNA uridine 5-carboxymethylaminomethyl modification enzyme MnmG (597 aa).

10–15 (GGGHAG) serves as a coordination point for FAD. 267 to 281 (GPRYCPSIEDKVVRF) contributes to the NAD(+) binding site.

The protein belongs to the MnmG family. As to quaternary structure, homodimer. Heterotetramer of two MnmE and two MnmG subunits. Requires FAD as cofactor.

The protein localises to the cytoplasm. Functionally, NAD-binding protein involved in the addition of a carboxymethylaminomethyl (cmnm) group at the wobble position (U34) of certain tRNAs, forming tRNA-cmnm(5)s(2)U34. This is tRNA uridine 5-carboxymethylaminomethyl modification enzyme MnmG from Thermus thermophilus (strain ATCC BAA-163 / DSM 7039 / HB27).